We begin with the raw amino-acid sequence, 949 residues long: Glycine dehydrogenase (decarboxylating) (949 aa).

K704 carries the N6-(pyridoxal phosphate)lysine modification.

It belongs to the GcvP family. The glycine cleavage system is composed of four proteins: P, T, L and H. Pyridoxal 5'-phosphate serves as cofactor.

It catalyses the reaction N(6)-[(R)-lipoyl]-L-lysyl-[glycine-cleavage complex H protein] + glycine + H(+) = N(6)-[(R)-S(8)-aminomethyldihydrolipoyl]-L-lysyl-[glycine-cleavage complex H protein] + CO2. In terms of biological role, the glycine cleavage system catalyzes the degradation of glycine. The P protein binds the alpha-amino group of glycine through its pyridoxal phosphate cofactor; CO(2) is released and the remaining methylamine moiety is then transferred to the lipoamide cofactor of the H protein. The protein is Glycine dehydrogenase (decarboxylating) of Bacteroides fragilis (strain ATCC 25285 / DSM 2151 / CCUG 4856 / JCM 11019 / LMG 10263 / NCTC 9343 / Onslow / VPI 2553 / EN-2).